Reading from the N-terminus, the 323-residue chain is Beta-ketoacyl-[acyl-carrier-protein] synthase III (323 aa).

Residues C113 and H250 contribute to the active site. Residues 251 to 255 (QANKR) form an ACP-binding region. The active site involves N280.

This sequence belongs to the thiolase-like superfamily. FabH family. Homodimer.

Its subcellular location is the cytoplasm. The enzyme catalyses malonyl-[ACP] + acetyl-CoA + H(+) = 3-oxobutanoyl-[ACP] + CO2 + CoA. Its pathway is lipid metabolism; fatty acid biosynthesis. Functionally, catalyzes the condensation reaction of fatty acid synthesis by the addition to an acyl acceptor of two carbons from malonyl-ACP. Catalyzes the first condensation reaction which initiates fatty acid synthesis and may therefore play a role in governing the total rate of fatty acid production. Possesses both acetoacetyl-ACP synthase and acetyl transacylase activities. Its substrate specificity determines the biosynthesis of branched-chain and/or straight-chain of fatty acids. This is Beta-ketoacyl-[acyl-carrier-protein] synthase III from Brucella melitensis biotype 2 (strain ATCC 23457).